A 131-amino-acid polypeptide reads, in one-letter code: Small ribosomal subunit protein uS11 (131 aa).

It belongs to the universal ribosomal protein uS11 family. In terms of assembly, part of the 30S ribosomal subunit. Interacts with proteins S7 and S18. Binds to IF-3.

Its function is as follows. Located on the platform of the 30S subunit, it bridges several disparate RNA helices of the 16S rRNA. Forms part of the Shine-Dalgarno cleft in the 70S ribosome. The sequence is that of Small ribosomal subunit protein uS11 from Endomicrobium trichonymphae.